Reading from the N-terminus, the 49-residue chain is Feruloyl esterase A (49 aa).

The protein belongs to the AB hydrolase superfamily. FaeA family.

The protein localises to the secreted. It catalyses the reaction feruloyl-polysaccharide + H2O = ferulate + polysaccharide.. Its function is as follows. Involved in degradation of plant cell walls. Hydrolyzes the feruloyl-arabinose ester bond in arabinoxylans as well as the feruloyl-galactose and feruloyl-arabinose ester bonds in pectin. Active against methyl esters of sinapate (MSA), but not caffeate (MCA). The chain is Feruloyl esterase A from Talaromyces stipitatus (strain ATCC 10500 / CBS 375.48 / QM 6759 / NRRL 1006) (Penicillium stipitatum).